Here is a 43-residue protein sequence, read N- to C-terminus: Ferritin light chain (43 aa).

The 43-residue stretch at 1–43 (MEAALLVEKNLNQALLDLHGLASARGDPHICDFLENHFLDEEV) folds into the Ferritin-like diiron domain.

This sequence belongs to the ferritin family. As to quaternary structure, oligomer of 24 subunits. There are two types of subunits: L (light) chain and H (heavy) chain. The major chain can be light or heavy, depending on the species and tissue type. The functional molecule forms a roughly spherical shell with a diameter of 12 nm and contains a central cavity into which the insoluble mineral iron core is deposited. Interacts with NCOA4.

It localises to the cytoplasmic vesicle. The protein resides in the autophagosome. It is found in the cytoplasm. The protein localises to the autolysosome. Stores iron in a soluble, non-toxic, readily available form. Important for iron homeostasis. Iron is taken up in the ferrous form and deposited as ferric hydroxides after oxidation. Also plays a role in delivery of iron to cells. Mediates iron uptake in capsule cells of the developing kidney. Delivery to lysosomes by the cargo receptor NCOA4 for autophagic degradation and release or iron. This is Ferritin light chain (FTL) from Ovis aries (Sheep).